The chain runs to 210 residues: ATP-dependent dethiobiotin synthetase BioD (210 aa).

Residue 12-17 participates in ATP binding; the sequence is NVGKTH. Position 16 (Thr16) interacts with Mg(2+). Lys37 is a catalytic residue. Residue Thr41 coordinates substrate. Glu114 lines the Mg(2+) pocket. An ATP-binding site is contributed by 114-117; it reads EGAG.

The protein belongs to the dethiobiotin synthetase family. Homodimer. It depends on Mg(2+) as a cofactor.

The protein localises to the cytoplasm. The enzyme catalyses (7R,8S)-7,8-diammoniononanoate + CO2 + ATP = (4R,5S)-dethiobiotin + ADP + phosphate + 3 H(+). It functions in the pathway cofactor biosynthesis; biotin biosynthesis; biotin from 7,8-diaminononanoate: step 1/2. Its function is as follows. Catalyzes a mechanistically unusual reaction, the ATP-dependent insertion of CO2 between the N7 and N8 nitrogen atoms of 7,8-diaminopelargonic acid (DAPA, also called 7,8-diammoniononanoate) to form a ureido ring. The sequence is that of ATP-dependent dethiobiotin synthetase BioD from Sulfurovum sp. (strain NBC37-1).